A 138-amino-acid chain; its full sequence is Gamma-glutamylaminecyclotransferase (138 aa).

Glutamate 63 serves as the catalytic Proton acceptor.

This sequence belongs to the gamma-glutamylcyclotransferase family.

The enzyme catalyses epsilon-(gamma-L-glutamyl)-L-lysine = 5-oxo-L-proline + L-lysine. May contribute to degradation of proteins cross-linked by transglutaminases by degrading the cross-link between a lysine and a glutamic acid residue. Catalyzes the formation of 5-oxo-L-proline from L-gamma-glutamyl-L-epsilon-lysine. In Xenopus laevis (African clawed frog), this protein is Gamma-glutamylaminecyclotransferase (ggact).